Here is a 317-residue protein sequence, read N- to C-terminus: MTINDSAISEQGMCEEEQVARIAWFYYHDGLTQSEISDRLGLTRLKVSRLLEKGHQSGIIRVQINSRFEGCLEYETQLRRQFSLQHVRVIPGLADADVGGRLGIGAAHMLMSLLQPQQMLAIGFGEATMNTLQRLSGFISSQQIRLVTLSGGVGSYMTGIGQLNAACSVNIIPAPLRASSADIARTLKNENCVKDVLLAAQAADVAIVGIGAVSQQDDATIIRSGYISQGEQLMIGRKGAVGDILGYFFDAKGDVVTNIKIHNELIGLPLSALKTIPVRVGVAGGENKAEAIAAAMKGGYINALVTDQDTAAAILRS.

A DNA-binding region (H-T-H motif) is located at residues 33 to 56 (QSEISDRLGLTRLKVSRLLEKGHQ).

Belongs to the SorC transcriptional regulatory family.

Its subcellular location is the cytoplasm. Its activity is regulated as follows. Inactivated by phosphorylated autoinducer-2 (phospho-AI-2). Phospho-AI-2 acts by binding to LsrR, which is then unable to bind to the promoter regions, allowing the transcription of the target genes. Its function is as follows. Transcriptional regulator that represses the expression of the lsr operon in the absence of the quorum-sensing signaling molecule autoinducer 2 (AI-2). It also represses the expression of the lsrRK operon. Acts by binding directly to the lsrA and lsrR promoter regions. In the presence of phosphorylated autoinducer-2 (phospho-AI-2), LsrR is inactivated, leading to the transcription of the genes. This Escherichia coli (strain K12 / DH10B) protein is Transcriptional regulator LsrR (lsrR).